Here is a 186-residue protein sequence, read N- to C-terminus: Probable RNA 2'-phosphotransferase (186 aa).

Belongs to the KptA/TPT1 family.

Removes the 2'-phosphate from RNA via an intermediate in which the phosphate is ADP-ribosylated by NAD followed by a presumed transesterification to release the RNA and generate ADP-ribose 1''-2''-cyclic phosphate (APPR&gt;P). May function as an ADP-ribosylase. The chain is Probable RNA 2'-phosphotransferase from Clostridium perfringens (strain SM101 / Type A).